The following is a 934-amino-acid chain: Serine/threonine-protein kinase PknD (934 aa).

The region spanning 4-296 (YELIRLIGKG…ELRQALQPYL (293 aa)) is the Protein kinase domain. Residues 10-18 (IGKGGMGEV) and Lys33 contribute to the ATP site. Asp138 acts as the Proton acceptor in catalysis.

The protein belongs to the protein kinase superfamily. Ser/Thr protein kinase family. As to quaternary structure, interacts with Pkn1. Autophosphorylated on serine and threonine residues. Present in elementary bodies 40 hours post-infection as 2 bands of approximately 55 to 60 and 45 to 50 kDa, which may be due to differential phosphorylation as well as degradation; an enzymatically active full-length protein can also be detected.

It catalyses the reaction L-seryl-[protein] + ATP = O-phospho-L-seryl-[protein] + ADP + H(+). It carries out the reaction L-threonyl-[protein] + ATP = O-phospho-L-threonyl-[protein] + ADP + H(+). Its function is as follows. Together with the serine/threonine kinase Pkn1, may play a role in the specific interactions with host proteins during intracellular growth. Autophosphorylates and also phosphorylates Pkn1. This is Serine/threonine-protein kinase PknD from Chlamydia trachomatis serovar L2 (strain ATCC VR-902B / DSM 19102 / 434/Bu).